A 51-amino-acid chain; its full sequence is uncharacterized protein (51 aa).

Functionally, this protein is non-essential for virus function. This is an uncharacterized protein from Sulfolobus spindle-shape virus 1 (SSV1).